The chain runs to 288 residues: MSIEFKNVDYIYAPGTPFQTQGLTNISFKIRSGSFVAIAGHTGSGKSTLMQHFDGLLLPSKGSVTIADKSITSNTSSKSLKEIRKKVGLVFQFPESQLFEETVLKDVMFGPLNFGFSEQKAKEQAIQWIRKVGLSEQVMNKSPFELSGGQMRRVAIAGVMAYEPDILCLDEPAAGLDPEGQKQMFDIFKNYQREGHTVILISHNMDDISQYADDMLVLEHGHLIKHASPKEVFSDPDWLKKHFLDEPATSKFARKLEKGGFQFSEMPLTVDSLVNEITTKLKSKGGNE.

One can recognise an ABC transporter domain in the interval 3-245 (IEFKNVDYIY…PDWLKKHFLD (243 aa)). Position 40-47 (40-47 (GHTGSGKS)) interacts with ATP.

The protein belongs to the ABC transporter superfamily. Energy-coupling factor EcfA family. As to quaternary structure, forms a stable energy-coupling factor (ECF) transporter complex composed of 2 membrane-embedded substrate-binding proteins (S component), 2 ATP-binding proteins (A component) and 2 transmembrane proteins (T component).

It localises to the cell membrane. In terms of biological role, ATP-binding (A) component of a common energy-coupling factor (ECF) ABC-transporter complex. Unlike classic ABC transporters this ECF transporter provides the energy necessary to transport a number of different substrates. This chain is Energy-coupling factor transporter ATP-binding protein EcfA2, found in Lactobacillus gasseri (strain ATCC 33323 / DSM 20243 / BCRC 14619 / CIP 102991 / JCM 1131 / KCTC 3163 / NCIMB 11718 / NCTC 13722 / AM63).